The chain runs to 93 residues: Phosphocarrier protein HPr (93 aa).

In terms of domain architecture, HPr spans 2–89; the sequence is AERRVNVGWA…KLVAEGLEEL (88 aa). Histidine 15 acts as the Pros-phosphohistidine intermediate in catalysis.

Belongs to the HPr family.

It is found in the cytoplasm. Functionally, general (non sugar-specific) component of the phosphoenolpyruvate-dependent sugar phosphotransferase system (sugar PTS). This major carbohydrate active-transport system catalyzes the phosphorylation of incoming sugar substrates concomitantly with their translocation across the cell membrane. The phosphoryl group from phosphoenolpyruvate (PEP) is transferred to the phosphoryl carrier protein HPr by enzyme I. Phospho-HPr then transfers it to the PTS EIIA domain. This chain is Phosphocarrier protein HPr (ptsH), found in Streptomyces coelicolor (strain ATCC BAA-471 / A3(2) / M145).